The chain runs to 217 residues: Leucyl/phenylalanyl-tRNA--protein transferase (217 aa).

This sequence belongs to the L/F-transferase family.

The protein resides in the cytoplasm. It catalyses the reaction N-terminal L-lysyl-[protein] + L-leucyl-tRNA(Leu) = N-terminal L-leucyl-L-lysyl-[protein] + tRNA(Leu) + H(+). It carries out the reaction N-terminal L-arginyl-[protein] + L-leucyl-tRNA(Leu) = N-terminal L-leucyl-L-arginyl-[protein] + tRNA(Leu) + H(+). The enzyme catalyses L-phenylalanyl-tRNA(Phe) + an N-terminal L-alpha-aminoacyl-[protein] = an N-terminal L-phenylalanyl-L-alpha-aminoacyl-[protein] + tRNA(Phe). Its function is as follows. Functions in the N-end rule pathway of protein degradation where it conjugates Leu, Phe and, less efficiently, Met from aminoacyl-tRNAs to the N-termini of proteins containing an N-terminal arginine or lysine. The chain is Leucyl/phenylalanyl-tRNA--protein transferase from Caulobacter vibrioides (strain ATCC 19089 / CIP 103742 / CB 15) (Caulobacter crescentus).